A 365-amino-acid chain; its full sequence is tRNA-specific 2-thiouridylase MnmA (365 aa).

ATP is bound by residues 14–21 and leucine 40; that span reads AMSGGVDS. Cysteine 108 serves as the catalytic Nucleophile. Cysteines 108 and 204 form a disulfide. Glycine 132 is an ATP binding site. The tract at residues 154-156 is interaction with tRNA; it reads KDQ. Cysteine 204 serves as the catalytic Cysteine persulfide intermediate.

Belongs to the MnmA/TRMU family.

Its subcellular location is the cytoplasm. It catalyses the reaction S-sulfanyl-L-cysteinyl-[protein] + uridine(34) in tRNA + AH2 + ATP = 2-thiouridine(34) in tRNA + L-cysteinyl-[protein] + A + AMP + diphosphate + H(+). Its function is as follows. Catalyzes the 2-thiolation of uridine at the wobble position (U34) of tRNA, leading to the formation of s(2)U34. This chain is tRNA-specific 2-thiouridylase MnmA, found in Rickettsia peacockii (strain Rustic).